A 169-amino-acid polypeptide reads, in one-letter code: Large ribosomal subunit protein uL10 (169 aa).

It belongs to the universal ribosomal protein uL10 family. As to quaternary structure, part of the ribosomal stalk of the 50S ribosomal subunit. The N-terminus interacts with L11 and the large rRNA to form the base of the stalk. The C-terminus forms an elongated spine to which L12 dimers bind in a sequential fashion forming a multimeric L10(L12)X complex.

Its function is as follows. Forms part of the ribosomal stalk, playing a central role in the interaction of the ribosome with GTP-bound translation factors. This is Large ribosomal subunit protein uL10 from Rickettsia africae (strain ESF-5).